Consider the following 211-residue polypeptide: FMN-dependent NADH:quinone oxidoreductase 3 (211 aa).

102–105 (MWNF) serves as a coordination point for FMN.

Belongs to the azoreductase type 1 family. As to quaternary structure, homodimer. FMN serves as cofactor.

It carries out the reaction 2 a quinone + NADH + H(+) = 2 a 1,4-benzosemiquinone + NAD(+). It catalyses the reaction N,N-dimethyl-1,4-phenylenediamine + anthranilate + 2 NAD(+) = 2-(4-dimethylaminophenyl)diazenylbenzoate + 2 NADH + 2 H(+). In terms of biological role, quinone reductase that provides resistance to thiol-specific stress caused by electrophilic quinones. Also exhibits azoreductase activity. Catalyzes the reductive cleavage of the azo bond in aromatic azo compounds to the corresponding amines. The protein is FMN-dependent NADH:quinone oxidoreductase 3 of Bacillus cereus (strain ATCC 10987 / NRS 248).